We begin with the raw amino-acid sequence, 231 residues long: Orotidine 5'-phosphate decarboxylase (231 aa).

Residues Asp-11, Lys-33, 60 to 69 (DLKFHDIPNT), Thr-120, Arg-181, Gln-190, Gly-210, and Arg-211 each bind substrate. The active-site Proton donor is Lys-62.

This sequence belongs to the OMP decarboxylase family. Type 1 subfamily. Homodimer.

It catalyses the reaction orotidine 5'-phosphate + H(+) = UMP + CO2. The protein operates within pyrimidine metabolism; UMP biosynthesis via de novo pathway; UMP from orotate: step 2/2. In terms of biological role, catalyzes the decarboxylation of orotidine 5'-monophosphate (OMP) to uridine 5'-monophosphate (UMP). The protein is Orotidine 5'-phosphate decarboxylase of Colwellia psychrerythraea (strain 34H / ATCC BAA-681) (Vibrio psychroerythus).